The chain runs to 303 residues: Putative fimbrium subunit Fim1C (303 aa).

The N-terminal stretch at 1–22 (MKKQALICALLATVLLPGCSED) is a signal peptide.

It belongs to the bacteroidetes fimbrillin superfamily. Mfa-like family. May be part of the fimbrial tip.

The protein resides in the fimbrium. Its function is as follows. Putative component of the fimbrium tip. Fimbriae are filamentous appendages on the cell surface that mediate cell adhesion and biofilm formation. In Bacteroides uniformis (strain ATCC 8492 / DSM 6597 / CCUG 4942 / CIP 103695 / JCM 5828 / KCTC 5204 / NCTC 13054 / VPI 0061), this protein is Putative fimbrium subunit Fim1C (fim1C).